Reading from the N-terminus, the 269-residue chain is 2-dehydro-3-deoxyphosphooctonate aldolase (269 aa).

Belongs to the KdsA family.

The protein resides in the cytoplasm. It catalyses the reaction D-arabinose 5-phosphate + phosphoenolpyruvate + H2O = 3-deoxy-alpha-D-manno-2-octulosonate-8-phosphate + phosphate. Its pathway is carbohydrate biosynthesis; 3-deoxy-D-manno-octulosonate biosynthesis; 3-deoxy-D-manno-octulosonate from D-ribulose 5-phosphate: step 2/3. It participates in bacterial outer membrane biogenesis; lipopolysaccharide biosynthesis. This is 2-dehydro-3-deoxyphosphooctonate aldolase from Chlamydia caviae (strain ATCC VR-813 / DSM 19441 / 03DC25 / GPIC) (Chlamydophila caviae).